A 152-amino-acid chain; its full sequence is Superoxide dismutase [Cu-Zn] 2 (152 aa).

2 N-linked (GlcNAc...) asparagine glycosylation sites follow: Asn9 and Asn33. Positions 45, 47, and 62 each coordinate Cu cation. An intrachain disulfide couples Cys56 to Cys145. Residues His62, His70, His79, and Asp82 each coordinate Zn(2+). Residue Asn85 is glycosylated (N-linked (GlcNAc...) asparagine). His119 lines the Cu cation pocket.

This sequence belongs to the Cu-Zn superoxide dismutase family. Cu cation is required as a cofactor. It depends on Zn(2+) as a cofactor. Expressed in fruits, leaves and pollen grains.

The protein localises to the cytoplasm. The protein resides in the endoplasmic reticulum. The catalysed reaction is 2 superoxide + 2 H(+) = H2O2 + O2. Its activity is regulated as follows. Inhibited by KCN and H(2)O(2). Functionally, destroys radicals which are normally produced within the cells and which are toxic to biological systems. Probably involved in the protection against oxidative stress during pollen development. The polypeptide is Superoxide dismutase [Cu-Zn] 2 (OLE5) (Olea europaea (Common olive)).